Reading from the N-terminus, the 63-residue chain is Large ribosomal subunit protein uL30 (63 aa).

It belongs to the universal ribosomal protein uL30 family. In terms of assembly, part of the 50S ribosomal subunit.

This Rickettsia africae (strain ESF-5) protein is Large ribosomal subunit protein uL30.